The primary structure comprises 159 residues: C-type lectin 1 (159 aa).

The first 23 residues, 1 to 23 (MGRFIFISFGLLVVFFFLSGAKG), serve as a signal peptide directing secretion. 4 disulfides stabilise this stretch: Cys-26–Cys-37, Cys-54–Cys-155, Cys-61–Cys-157, and Cys-130–Cys-147. The 124-residue stretch at 33–156 (MYGLCYKIFD…CKVKNAFLCQ (124 aa)) folds into the C-type lectin domain. The N-linked (GlcNAc...) asparagine glycan is linked to Asn-118. Positions 119–121 (LTD) match the Sugar-binding motif. Residues Asp-121, Asp-127, and Asn-143 each coordinate Ca(2+).

The protein belongs to the true venom lectin family. In terms of assembly, homodimer; disulfide-linked. In terms of tissue distribution, expressed by the venom gland.

Its subcellular location is the secreted. Its function is as follows. Lectin which recognizes specific carbohydrate structures and agglutinates a variety of animal cells by binding to cell-surface glycoproteins and glycolipids. May be a calcium-dependent lectin. The sequence is that of C-type lectin 1 from Bitis gabonica (Gaboon adder).